The following is a 498-amino-acid chain: Lysine--tRNA ligase (498 aa).

The Mg(2+) site is built by Glu409 and Glu416.

Belongs to the class-II aminoacyl-tRNA synthetase family. Homodimer. It depends on Mg(2+) as a cofactor.

The protein resides in the cytoplasm. The enzyme catalyses tRNA(Lys) + L-lysine + ATP = L-lysyl-tRNA(Lys) + AMP + diphosphate. In Coxiella burnetii (strain CbuK_Q154) (Coxiella burnetii (strain Q154)), this protein is Lysine--tRNA ligase.